Consider the following 215-residue polypeptide: LexA repressor (215 aa).

Residues 28–48 (RAEIAAELGFSSPNAAEEHLR) constitute a DNA-binding region (H-T-H motif). Residues serine 133 and lysine 170 each act as for autocatalytic cleavage activity in the active site.

The protein belongs to the peptidase S24 family. In terms of assembly, homodimer.

It carries out the reaction Hydrolysis of Ala-|-Gly bond in repressor LexA.. Represses a number of genes involved in the response to DNA damage (SOS response), including recA and lexA. In the presence of single-stranded DNA, RecA interacts with LexA causing an autocatalytic cleavage which disrupts the DNA-binding part of LexA, leading to derepression of the SOS regulon and eventually DNA repair. This is LexA repressor from Burkholderia cenocepacia (strain HI2424).